A 115-amino-acid chain; its full sequence is MSNIIKQLEQEQLRTDIPAFAQGDTVRVQVRVIEGGKERLQAFEGIVIAKRNRGLHSAFTVRKISNGEGVERVFQTHSPLIASVELKRRGDVRRAKLYYLRNLSGKAARIKEKLN.

It belongs to the bacterial ribosomal protein bL19 family.

Functionally, this protein is located at the 30S-50S ribosomal subunit interface and may play a role in the structure and function of the aminoacyl-tRNA binding site. This Tolumonas auensis (strain DSM 9187 / NBRC 110442 / TA 4) protein is Large ribosomal subunit protein bL19.